A 274-amino-acid polypeptide reads, in one-letter code: Probable cyclic nucleotide phosphodiesterase RPA0124 (274 aa).

Fe cation is bound by residues Asp8, His10, Asp49, Asn79, His155, His194, and His196. AMP is bound by residues His10, Asp49, and 79–80 (NH). His196 provides a ligand contact to AMP.

The protein belongs to the cyclic nucleotide phosphodiesterase class-III family. It depends on Fe(2+) as a cofactor.

This chain is Probable cyclic nucleotide phosphodiesterase RPA0124, found in Rhodopseudomonas palustris (strain ATCC BAA-98 / CGA009).